We begin with the raw amino-acid sequence, 337 residues long: Tryptophan--tRNA ligase (337 aa).

ATP contacts are provided by residues 9 to 11 (RPT) and 17 to 18 (GH). Positions 10 to 18 (PTGRLHLGH) match the 'HIGH' region motif. Asp137 contacts L-tryptophan. ATP contacts are provided by residues 149 to 151 (GKD), Leu187, and 195 to 199 (KMSKS). A 'KMSKS' region motif is present at residues 195-199 (KMSKS).

The protein belongs to the class-I aminoacyl-tRNA synthetase family. As to quaternary structure, homodimer.

Its subcellular location is the cytoplasm. The catalysed reaction is tRNA(Trp) + L-tryptophan + ATP = L-tryptophyl-tRNA(Trp) + AMP + diphosphate + H(+). Functionally, catalyzes the attachment of tryptophan to tRNA(Trp). The polypeptide is Tryptophan--tRNA ligase (Treponema pallidum (strain Nichols)).